The primary structure comprises 287 residues: Undecaprenyl-diphosphatase (287 aa).

7 helical membrane-spanning segments follow: residues 6 to 26 (LHLL…FIPV), 45 to 65 (SGKV…MWIF), 89 to 109 (NLLL…KSIK), 111 to 131 (VFYH…IMLW), 204 to 224 (ATEF…VYDL), 238 to 258 (AIAV…RAVL), and 266 to 286 (YRVF…WIYA).

It belongs to the UppP family.

It is found in the cell inner membrane. It carries out the reaction di-trans,octa-cis-undecaprenyl diphosphate + H2O = di-trans,octa-cis-undecaprenyl phosphate + phosphate + H(+). In terms of biological role, catalyzes the dephosphorylation of undecaprenyl diphosphate (UPP). Confers resistance to bacitracin. The chain is Undecaprenyl-diphosphatase from Bordetella bronchiseptica (strain ATCC BAA-588 / NCTC 13252 / RB50) (Alcaligenes bronchisepticus).